Reading from the N-terminus, the 391-residue chain is Processive diacylglycerol beta-glucosyltransferase (391 aa).

This sequence belongs to the glycosyltransferase 28 family. UgtP subfamily.

The protein resides in the cell membrane. It carries out the reaction a 1,2-diacyl-3-O-(beta-D-glucopyranosyl)-sn-glycerol + UDP-alpha-D-glucose = a 1,2-diacyl-3-O-(beta-D-Glc-(1-&gt;6)-beta-D-Glc)-sn-glycerol + UDP + H(+). The catalysed reaction is a 1,2-diacyl-sn-glycerol + UDP-alpha-D-glucose = a 1,2-diacyl-3-O-(beta-D-glucopyranosyl)-sn-glycerol + UDP + H(+). It participates in glycolipid metabolism; diglucosyl-diacylglycerol biosynthesis. Processive glucosyltransferase involved in the biosynthesis of both the bilayer- and non-bilayer-forming membrane glucolipids. Is able to successively transfer two glucosyl residues to diacylglycerol (DAG), thereby catalyzing the formation of beta-monoglucosyl-DAG (3-O-(beta-D-glucopyranosyl)-1,2-diacyl-sn-glycerol) and beta-diglucosyl-DAG (3-O-(beta-D-glucopyranosyl-beta-(1-&gt;6)-D-glucopyranosyl)-1,2-diacyl-sn-glycerol). Beta-diglucosyl-DAG is the predominant glycolipid found in Bacillales and is also used as a membrane anchor for lipoteichoic acid (LTA). The sequence is that of Processive diacylglycerol beta-glucosyltransferase from Staphylococcus haemolyticus (strain JCSC1435).